A 180-amino-acid polypeptide reads, in one-letter code: ATP synthase subunit delta (180 aa).

This sequence belongs to the ATPase delta chain family. In terms of assembly, F-type ATPases have 2 components, F(1) - the catalytic core - and F(0) - the membrane proton channel. F(1) has five subunits: alpha(3), beta(3), gamma(1), delta(1), epsilon(1). F(0) has three main subunits: a(1), b(2) and c(10-14). The alpha and beta chains form an alternating ring which encloses part of the gamma chain. F(1) is attached to F(0) by a central stalk formed by the gamma and epsilon chains, while a peripheral stalk is formed by the delta and b chains.

The protein localises to the cell inner membrane. F(1)F(0) ATP synthase produces ATP from ADP in the presence of a proton or sodium gradient. F-type ATPases consist of two structural domains, F(1) containing the extramembraneous catalytic core and F(0) containing the membrane proton channel, linked together by a central stalk and a peripheral stalk. During catalysis, ATP synthesis in the catalytic domain of F(1) is coupled via a rotary mechanism of the central stalk subunits to proton translocation. Functionally, this protein is part of the stalk that links CF(0) to CF(1). It either transmits conformational changes from CF(0) to CF(1) or is implicated in proton conduction. This chain is ATP synthase subunit delta, found in Geobacter metallireducens (strain ATCC 53774 / DSM 7210 / GS-15).